The primary structure comprises 83 residues: Cytochrome b559 subunit alpha (83 aa).

A helical transmembrane segment spans residues V21–W35. H23 is a binding site for heme.

Belongs to the PsbE/PsbF family. In terms of assembly, heterodimer of an alpha subunit and a beta subunit. PSII is composed of 1 copy each of membrane proteins PsbA, PsbB, PsbC, PsbD, PsbE, PsbF, PsbH, PsbI, PsbJ, PsbK, PsbL, PsbM, PsbT, PsbX, PsbY, PsbZ, Psb30/Ycf12, at least 3 peripheral proteins of the oxygen-evolving complex and a large number of cofactors. It forms dimeric complexes. It depends on heme b as a cofactor.

It localises to the plastid. The protein localises to the chloroplast thylakoid membrane. Its function is as follows. This b-type cytochrome is tightly associated with the reaction center of photosystem II (PSII). PSII is a light-driven water:plastoquinone oxidoreductase that uses light energy to abstract electrons from H(2)O, generating O(2) and a proton gradient subsequently used for ATP formation. It consists of a core antenna complex that captures photons, and an electron transfer chain that converts photonic excitation into a charge separation. The polypeptide is Cytochrome b559 subunit alpha (Agrostis stolonifera (Creeping bentgrass)).